Reading from the N-terminus, the 129-residue chain is Glycine cleavage system H protein (129 aa).

In terms of domain architecture, Lipoyl-binding spans 24–106 (LLKIGVSEFA…IGEGWLVILK (83 aa)). Residue Lys-65 is modified to N6-lipoyllysine.

It belongs to the GcvH family. In terms of assembly, the glycine cleavage system is composed of four proteins: P, T, L and H. (R)-lipoate serves as cofactor.

Its function is as follows. The glycine cleavage system catalyzes the degradation of glycine. The H protein shuttles the methylamine group of glycine from the P protein to the T protein. This is Glycine cleavage system H protein from Prochlorococcus marinus (strain MIT 9215).